A 112-amino-acid chain; its full sequence is Colipase (112 aa).

The N-terminal stretch at 1-17 is a signal peptide; the sequence is MEKVLALLLVTLTVAYA. Positions 18–22 are cleaved as a propeptide — enterostatin, activation peptide; the sequence is VPDPR. 5 cysteine pairs are disulfide-bonded: cysteine 34/cysteine 45, cysteine 40/cysteine 56, cysteine 44/cysteine 78, cysteine 66/cysteine 86, and cysteine 80/cysteine 104.

It belongs to the colipase family. Forms a 1:1 stoichiometric complex with pancreatic lipase. As to expression, expressed by the pancreas.

The protein localises to the secreted. Functionally, colipase is a cofactor of pancreatic lipase. It allows the lipase to anchor itself to the lipid-water interface. Without colipase the enzyme is washed off by bile salts, which have an inhibitory effect on the lipase. Enterostatin has a biological activity as a satiety signal. In Sus scrofa (Pig), this protein is Colipase (CLPS).